The sequence spans 189 residues: Leucine repeat adapter protein 25 (189 aa).

Ser28 is subject to Phosphoserine. Positions 54–82 are disordered; the sequence is ELSRAARAPDGPRHAAGSANSGSAAGPRR. A compositionally biased stretch (low complexity) spans 68–79; the sequence is AAGSANSGSAAG. Residues 86–114 form an LRR repeat; the sequence is LDSALAALRKEMVGLRQLDMSLLCQLWGL. Residues 136-175 form a disordered region; it reads SSLHSDSSYPPDAGLSDDEEPPDASLPPDPPPLTVPQTHN. A compositionally biased stretch (pro residues) spans 159–169; the sequence is ASLPPDPPPLT. The residue at position 188 (Ser188) is a Phosphoserine.

Belongs to the FAM89 family. As to quaternary structure, interacts with SKI. Interacts (via LRR repeat) with CDC42BPA (via AGC-kinase C-terminal domain), CDC42BPB (via AGC-kinase C-terminal domain) and LIMK1 (via LIM zinc-binding domains). Forms a tripartite complex with CDC42BPA, CDC42BPB and LIMK1. In terms of assembly, (Microbial infection) Interacts with mouse mammary tumor virus (MMTV) envelope glycoprotein gp70. Widely expressed. Expressed in the early postnatal brain.

The protein resides in the cytoplasm. It is found in the cell projection. The protein localises to the lamellipodium. Its subcellular location is the cell surface. In terms of biological role, negatively regulates TGF-beta-induced signaling; in cooperation with SKI prevents the translocation of SMAD2 from the nucleus to the cytoplasm in response to TGF-beta. Acts as an adapter that mediates the specific recognition of LIMK1 by CDC42BPA and CDC42BPB in the lamellipodia. LRAP25-mediated CDC42BPA/CDC42BPB targeting to LIMK1 and the lamellipodium results in LIMK1 activation and the subsequent phosphorylation of CFL1 which is important for lamellipodial F-actin regulation. Functionally, (Microbial infection) May be a receptor for mouse mammary tumor virus (MMTV). This Mus musculus (Mouse) protein is Leucine repeat adapter protein 25.